The sequence spans 100 residues: Protein Tat (100 aa).

Residues 1-24 (MDPIDPDLEPWKHPGSQPRTVCNN) form an interaction with human CREBBP region. The tract at residues 1 to 48 (MDPIDPDLEPWKHPGSQPRTVCNNCYCKACCYHCIYCFTKKGLGISYG) is transactivation. Zn(2+)-binding residues include cysteine 22, cysteine 25, and cysteine 27. The segment at 22–37 (CNNCYCKACCYHCIYC) is cysteine-rich. Lysine 28 carries the N6-acetyllysine; by host PCAF modification. Residues cysteine 30, histidine 33, cysteine 34, and cysteine 37 each coordinate Zn(2+). Residues 38 to 48 (FTKKGLGISYG) are core. The segment covering 48 to 58 (GRKKRTTRRRT) has biased composition (basic residues). Residues 48 to 100 (GRKKRTTRRRTAPAGSKNNQDSIPKQPLSQSRGNKEGSEKSTKEVASKTEADQ) are disordered. The short motif at 49–57 (RKKRTTRRR) is the Nuclear localization signal, RNA-binding (TAR), and protein transduction element. Residues 49 to 87 (RKKRTTRRRTAPAGSKNNQDSIPKQPLSQSRGNKEGSEK) form an interaction with the host capping enzyme RNGTT region. N6-acetyllysine; by host EP300 and GCN5L2 occurs at positions 50 and 51. An Asymmetric dimethylarginine; by host PRMT6 modification is found at arginine 52. Over residues 63 to 79 (SKNNQDSIPKQPLSQSR) the composition is skewed to polar residues. Lysine 72 is covalently cross-linked (Glycyl lysine isopeptide (Lys-Gly) (interchain with G-Cter in ubiquitin)). Basic and acidic residues predominate over residues 80–100 (GNKEGSEKSTKEVASKTEADQ).

The protein belongs to the lentiviruses Tat family. As to quaternary structure, interacts with host CCNT1. Associates with the P-TEFb complex composed at least of Tat, P-TEFb (CDK9 and CCNT1), TAR RNA, RNA Pol II. Recruits the HATs CREBBP, TAF1/TFIID, EP300, PCAF and GCN5L2. Interacts with host KAT5/Tip60; this interaction targets the latter to degradation. Interacts with the host deacetylase SIRT1. Interacts with host capping enzyme RNGTT; this interaction stimulates RNGTT. Binds to host KDR, and to the host integrins ITGAV/ITGB3 and ITGA5/ITGB1. Interacts with host KPNB1/importin beta-1 without previous binding to KPNA1/importin alpha-1. Interacts with EIF2AK2. Interacts with host nucleosome assembly protein NAP1L1; this interaction may be required for the transport of Tat within the nucleus, since the two proteins interact at the nuclear rim. Interacts with host C1QBP/SF2P32; this interaction involves lysine-acetylated Tat. Interacts with the host chemokine receptors CCR2, CCR3 and CXCR4. Interacts with host DPP4/CD26; this interaction may trigger an anti-proliferative effect. Interacts with host LDLR. Interacts with the host extracellular matrix metalloproteinase MMP1. Interacts with host PRMT6; this interaction mediates Tat's methylation. Interacts with, and is ubiquitinated by MDM2/Hdm2. Interacts with host PSMC3 and HTATIP2. Interacts with STAB1; this interaction may overcome SATB1-mediated repression of IL2 and IL2RA (interleukin) in T cells by binding to the same domain than HDAC1. Interacts (when acetylated) with human CDK13, thereby increasing HIV-1 mRNA splicing and promoting the production of the doubly spliced HIV-1 protein Nef. Interacts with host TBP; this interaction modulates the activity of transcriptional pre-initiation complex. Interacts with host RELA. Asymmetrical arginine methylation by host PRMT6 seems to diminish the transactivation capacity of Tat and affects the interaction with host CCNT1. In terms of processing, acetylation by EP300, CREBBP, GCN5L2/GCN5 and PCAF regulates the transactivation activity of Tat. EP300-mediated acetylation of Lys-50 promotes dissociation of Tat from the TAR RNA through the competitive binding to PCAF's bromodomain. In addition, the non-acetylated Tat's N-terminus can also interact with PCAF. PCAF-mediated acetylation of Lys-28 enhances Tat's binding to CCNT1. Lys-50 is deacetylated by SIRT1. Post-translationally, polyubiquitination by host MDM2 does not target Tat to degradation, but activates its transactivation function and fosters interaction with CCNT1 and TAR RNA. Phosphorylated by EIF2AK2 on serine and threonine residues adjacent to the basic region important for TAR RNA binding and function. Phosphorylation of Tat by EIF2AK2 is dependent on the prior activation of EIF2AK2 by dsRNA.

The protein localises to the host nucleus. The protein resides in the host nucleolus. Its subcellular location is the host cytoplasm. It is found in the secreted. Transcriptional activator that increases RNA Pol II processivity, thereby increasing the level of full-length viral transcripts. Recognizes a hairpin structure at the 5'-LTR of the nascent viral mRNAs referred to as the transactivation responsive RNA element (TAR) and recruits the cyclin T1-CDK9 complex (P-TEFb complex) that will in turn hyperphosphorylate the RNA polymerase II to allow efficient elongation. The CDK9 component of P-TEFb and other Tat-activated kinases hyperphosphorylate the C-terminus of RNA Pol II that becomes stabilized and much more processive. Other factors such as HTATSF1/Tat-SF1, SUPT5H/SPT5, and HTATIP2 are also important for Tat's function. Besides its effect on RNA Pol II processivity, Tat induces chromatin remodeling of proviral genes by recruiting the histone acetyltransferases (HATs) CREBBP, EP300 and PCAF to the chromatin. This also contributes to the increase in proviral transcription rate, especially when the provirus integrates in transcriptionally silent region of the host genome. To ensure maximal activation of the LTR, Tat mediates nuclear translocation of NF-kappa-B by interacting with host RELA. Through its interaction with host TBP, Tat may also modulate transcription initiation. Tat can reactivate a latently infected cell by penetrating in it and transactivating its LTR promoter. In the cytoplasm, Tat is thought to act as a translational activator of HIV-1 mRNAs. Functionally, extracellular circulating Tat can be endocytosed by surrounding uninfected cells via the binding to several surface receptors such as CD26, CXCR4, heparan sulfate proteoglycans (HSPG) or LDLR. Neurons are rarely infected, but they internalize Tat via their LDLR. Through its interaction with nuclear HATs, Tat is potentially able to control the acetylation-dependent cellular gene expression. Modulates the expression of many cellular genes involved in cell survival, proliferation or in coding for cytokines or cytokine receptors. Tat plays a role in T-cell and neurons apoptosis. Tat induced neurotoxicity and apoptosis probably contribute to neuroAIDS. Circulating Tat also acts as a chemokine-like and/or growth factor-like molecule that binds to specific receptors on the surface of the cells, affecting many cellular pathways. In the vascular system, Tat binds to ITGAV/ITGB3 and ITGA5/ITGB1 integrins dimers at the surface of endothelial cells and competes with bFGF for heparin-binding sites, leading to an excess of soluble bFGF. The protein is Protein Tat of Pan (chimpanzees).